Reading from the N-terminus, the 178-residue chain is ATP synthase subunit delta (178 aa).

The protein belongs to the ATPase delta chain family. In terms of assembly, F-type ATPases have 2 components, F(1) - the catalytic core - and F(0) - the membrane proton channel. F(1) has five subunits: alpha(3), beta(3), gamma(1), delta(1), epsilon(1). F(0) has three main subunits: a(1), b(2) and c(10-14). The alpha and beta chains form an alternating ring which encloses part of the gamma chain. F(1) is attached to F(0) by a central stalk formed by the gamma and epsilon chains, while a peripheral stalk is formed by the delta and b chains.

It localises to the cell membrane. In terms of biological role, f(1)F(0) ATP synthase produces ATP from ADP in the presence of a proton or sodium gradient. F-type ATPases consist of two structural domains, F(1) containing the extramembraneous catalytic core and F(0) containing the membrane proton channel, linked together by a central stalk and a peripheral stalk. During catalysis, ATP synthesis in the catalytic domain of F(1) is coupled via a rotary mechanism of the central stalk subunits to proton translocation. Functionally, this protein is part of the stalk that links CF(0) to CF(1). It either transmits conformational changes from CF(0) to CF(1) or is implicated in proton conduction. The chain is ATP synthase subunit delta from Streptococcus pyogenes serotype M3 (strain ATCC BAA-595 / MGAS315).